Reading from the N-terminus, the 427-residue chain is Indole diterpene prenyltransferase idtF (427 aa).

Substrate is bound by residues Arg97, Lys195, Arg264, Lys266, Tyr268, and Tyr352.

This sequence belongs to the tryptophan dimethylallyltransferase family.

Its pathway is secondary metabolite biosynthesis. Functionally, indole diterpene prenyltransferase; part of the gene cluster that mediates the biosynthesis of paspalitrems, indole-diterpene (IDT) mycotoxins that are potent tremorgens in mammals. The geranylgeranyl diphosphate (GGPP) synthase idtG is proposed to catalyze the first step in IDT biosynthesis via catalysis of a series of iterative condensations of isopentenyl diphosphate (IPP) with dimethylallyl diphosphate (DMAPP), geranyl diphosphate (GPP), and farnesyl diphosphate (FPP), to form GGPP. Condensation of indole-3-glycerol phosphate with GGPP by the prenyltransferase idtC then forms 3-geranylgeranylindole (3-GGI). Epoxidation of the two terminal alkenes of the geranylgeranyl moiety by the FAD-dependent monooxygenase idtM, and cyclization by the terpene cyclase idtB then leads to the production of paspaline. The cytochrome P450 monooxygenase idtP then catalyzes oxidative elimination of the pendant methyl group at C-12 of paspaline and generates the C-10 ketone to yield 13-desoxypaxilline. The cytochrome P450 monooxygenase idtQ may catalyze the C-13 oxidation of 13-desoxypaxilline to afford paxilline. Considering that both paspalicine and paxilline were detected in C.paspali, idtQ also catalyzes the formation of paspalinine from 13-desoxypaxilline via paspalicine as an intermediate. Finally, the alpha-prenyltransferase idtF prenylates paspalinine at the C-20 or the C-21 positions to yield paspalitrems A and C, respectively. The hydroxylation of paspalitrem A at C-32 by a still unknown oxidase affords paspalitrem B. The protein is Indole diterpene prenyltransferase idtF of Claviceps paspali (Rye ergot fungus).